The primary structure comprises 329 residues: Aspartate--ammonia ligase (329 aa).

Belongs to the class-II aminoacyl-tRNA synthetase family. AsnA subfamily.

The protein localises to the cytoplasm. The enzyme catalyses L-aspartate + NH4(+) + ATP = L-asparagine + AMP + diphosphate + H(+). The protein operates within amino-acid biosynthesis; L-asparagine biosynthesis; L-asparagine from L-aspartate (ammonia route): step 1/1. The protein is Aspartate--ammonia ligase of Ureaplasma urealyticum serovar 10 (strain ATCC 33699 / Western).